The following is a 135-amino-acid chain: Translation initiation factor 2 subunit beta (135 aa).

It belongs to the eIF-2-beta/eIF-5 family. Heterotrimer composed of an alpha, a beta and a gamma chain.

Functionally, eIF-2 functions in the early steps of protein synthesis by forming a ternary complex with GTP and initiator tRNA. This is Translation initiation factor 2 subunit beta from Methanobrevibacter smithii (strain ATCC 35061 / DSM 861 / OCM 144 / PS).